A 418-amino-acid chain; its full sequence is Vacuole membrane protein HFL1 (418 aa).

The Extracellular segment spans residues 1–5; that stretch reads MENKL. The helical transmembrane segment at 6 to 26 threads the bilayer; that stretch reads LCWWLYWPCVYSSIIATIISF. The Cytoplasmic segment spans residues 27 to 43; that stretch reads YTITRHLLNYRKPYEQR. Residues 44–64 form a helical membrane-spanning segment; sequence LSIRILLLVPIFSVSCASGII. Topologically, residues 65-78 are extracellular; sequence KPEAAQFYVDPIRE. Residues 79–99 form a helical membrane-spanning segment; the sequence is FYEAFVIYTFFTFLTLLLGGE. The Cytoplasmic segment spans residues 100–141; it reads RNIITVLSLNHAPTRHPIPLIGKICKPIDLSDPFDFLFVKKG. Residues 142-162 form a helical membrane-spanning segment; that stretch reads ILQYVWFKPFYCFGTLICSAW. At 163-168 the chain is on the extracellular side; it reads KLPKFE. Residues 169–189 form a helical membrane-spanning segment; that stretch reads IFLNVFYNISVTWSLYSLALF. Residues 190-205 lie on the Cytoplasmic side of the membrane; sequence WKCLYPELTPYKPWLK. Residues 206–226 form a helical membrane-spanning segment; sequence FLCVKLIIFASYWQSIIIQGL. Residues 227 to 246 are Extracellular-facing; sequence VVTGKLGTGNQDRTSGYVYK. The chain crosses the membrane as a helical span at residues 247–267; that stretch reads NGLLCIEMVPFAILHAVAFPW. Residues 268-418 are Cytoplasmic-facing; it reads NKYTAFSIPY…DVQSRSSMAC (151 aa). The tract at residues 379–402 is ATG8-interacting region; it reads RTFPEDPNYPVVHDYTMGHRYSRS.

The protein belongs to the TMEM184 family. In terms of assembly, interacts with ATG8.

It is found in the vacuole membrane. In terms of biological role, vacuole membrane protein that recruits ATG8 to facilitate the degradation of vacuolar integral membrane proteins during early-stationary vacuole turnover (EVT) when cells enter stationary phase. The sequence is that of Vacuole membrane protein HFL1 from Saccharomyces cerevisiae (strain ATCC 204508 / S288c) (Baker's yeast).